Here is a 440-residue protein sequence, read N- to C-terminus: MPTPSTFVDQTKIEVQAGKGGDGMVAFRHEKFMPNGGPAGGDGGRGGSIIFVADNGLRTLMDFRYRRKFKAEPGENGRIKAQYGKAAKDLYLKVPVGTTVYDFFTGEEIGDLVENGQELVVAKGGRGGRGNIHFATSVNTAPEIAENGEPGEFRTLRLELKVLADVGLVGFPSVGKSTLLSVVTSAKPKIAAYQFTTLKPNLGMVLLPDGRDFSMADLPGLIKGASQGVGLGIQFLRHVERTKVILHMVSMDPNNGRDAYEDYETILHELASYTEDDLSSKREIIVASQMDIPGADEKLAQFKKDLAAHGVDQEVYELSSVTHQGVDRLMSRAADLVSEVEAQEAEAAVKPKEEVKTKTYKYHRPEKMEFTVEKLADHEFEIHGEQLERLVAMTNLDHQDGIMRLARRLKKMGVDDELRAQGAVDGDDVYIGDFSFEFVQ.

One can recognise an Obg domain in the interval 5–163 (STFVDQTKIE…RTLRLELKVL (159 aa)). One can recognise an OBG-type G domain in the interval 164 to 338 (ADVGLVGFPS…LMSRAADLVS (175 aa)). Residues 170-177 (GFPSVGKS), 195-199 (FTTLK), 217-220 (DLPG), 288-291 (SQMD), and 319-321 (SSV) each bind GTP. Residues S177 and T197 each contribute to the Mg(2+) site. The region spanning 362 to 440 (YHRPEKMEFT…IGDFSFEFVQ (79 aa)) is the OCT domain.

The protein belongs to the TRAFAC class OBG-HflX-like GTPase superfamily. OBG GTPase family. In terms of assembly, monomer. Mg(2+) serves as cofactor.

The protein localises to the cytoplasm. Its function is as follows. An essential GTPase which binds GTP, GDP and possibly (p)ppGpp with moderate affinity, with high nucleotide exchange rates and a fairly low GTP hydrolysis rate. Plays a role in control of the cell cycle, stress response, ribosome biogenesis and in those bacteria that undergo differentiation, in morphogenesis control. This Lactobacillus delbrueckii subsp. bulgaricus (strain ATCC BAA-365 / Lb-18) protein is GTPase Obg.